The primary structure comprises 96 residues: Co-chaperonin GroES (96 aa).

Belongs to the GroES chaperonin family. In terms of assembly, heptamer of 7 subunits arranged in a ring. Interacts with the chaperonin GroEL.

It is found in the cytoplasm. Together with the chaperonin GroEL, plays an essential role in assisting protein folding. The GroEL-GroES system forms a nano-cage that allows encapsulation of the non-native substrate proteins and provides a physical environment optimized to promote and accelerate protein folding. GroES binds to the apical surface of the GroEL ring, thereby capping the opening of the GroEL channel. This is Co-chaperonin GroES from Cupriavidus necator (strain ATCC 17699 / DSM 428 / KCTC 22496 / NCIMB 10442 / H16 / Stanier 337) (Ralstonia eutropha).